The primary structure comprises 313 residues: Glyoxylate/hydroxypyruvate reductase A (313 aa).

Arg-228 is an active-site residue. Residue His-276 is the Proton donor of the active site.

It belongs to the D-isomer specific 2-hydroxyacid dehydrogenase family. GhrA subfamily.

It is found in the cytoplasm. It carries out the reaction glycolate + NADP(+) = glyoxylate + NADPH + H(+). It catalyses the reaction (R)-glycerate + NAD(+) = 3-hydroxypyruvate + NADH + H(+). The enzyme catalyses (R)-glycerate + NADP(+) = 3-hydroxypyruvate + NADPH + H(+). In terms of biological role, catalyzes the NADPH-dependent reduction of glyoxylate and hydroxypyruvate into glycolate and glycerate, respectively. In Yersinia enterocolitica serotype O:8 / biotype 1B (strain NCTC 13174 / 8081), this protein is Glyoxylate/hydroxypyruvate reductase A.